A 397-amino-acid chain; its full sequence is Acetate kinase (397 aa).

Asparagine 8 is a binding site for Mg(2+). ATP is bound at residue lysine 15. Arginine 89 is a substrate binding site. The Proton donor/acceptor role is filled by aspartate 146. ATP contacts are provided by residues 206–210 (HLGNG), 281–283 (DLR), and 329–333 (GVGEN). Glutamate 382 is a Mg(2+) binding site.

It belongs to the acetokinase family. In terms of assembly, homodimer. The cofactor is Mg(2+). Mn(2+) serves as cofactor.

The protein resides in the cytoplasm. It catalyses the reaction acetate + ATP = acetyl phosphate + ADP. The protein operates within metabolic intermediate biosynthesis; acetyl-CoA biosynthesis; acetyl-CoA from acetate: step 1/2. Its function is as follows. Catalyzes the formation of acetyl phosphate from acetate and ATP. Can also catalyze the reverse reaction. The chain is Acetate kinase from Bacillus cereus (strain ATCC 14579 / DSM 31 / CCUG 7414 / JCM 2152 / NBRC 15305 / NCIMB 9373 / NCTC 2599 / NRRL B-3711).